The sequence spans 156 residues: Phosphopantetheine adenylyltransferase (156 aa).

It belongs to the eukaryotic CoaD family.

Its subcellular location is the cytoplasm. It carries out the reaction (R)-4'-phosphopantetheine + ATP + H(+) = 3'-dephospho-CoA + diphosphate. It functions in the pathway cofactor biosynthesis; coenzyme A biosynthesis. In terms of biological role, reversibly transfers an adenylyl group from ATP to 4'-phosphopantetheine, yielding dephospho-CoA (dPCoA) and pyrophosphate. The sequence is that of Phosphopantetheine adenylyltransferase from Methanosarcina acetivorans (strain ATCC 35395 / DSM 2834 / JCM 12185 / C2A).